The primary structure comprises 689 residues: Methionine--tRNA ligase (689 aa).

The 'HIGH' region motif lies at 16–26; the sequence is PYANAGLHLGH. Zn(2+)-binding residues include Cys147, Cys150, Cys160, and Cys163. The 'KMSKS' region signature appears at 342–346; that stretch reads KMSKS. Lys345 contributes to the ATP binding site. A tRNA-binding domain is found at 585–689; sequence DFAKVDLRVG…AGVKPGMRVG (105 aa).

It belongs to the class-I aminoacyl-tRNA synthetase family. MetG type 1 subfamily. Homodimer. It depends on Zn(2+) as a cofactor.

Its subcellular location is the cytoplasm. It catalyses the reaction tRNA(Met) + L-methionine + ATP = L-methionyl-tRNA(Met) + AMP + diphosphate. Its function is as follows. Is required not only for elongation of protein synthesis but also for the initiation of all mRNA translation through initiator tRNA(fMet) aminoacylation. This is Methionine--tRNA ligase from Chromobacterium violaceum (strain ATCC 12472 / DSM 30191 / JCM 1249 / CCUG 213 / NBRC 12614 / NCIMB 9131 / NCTC 9757 / MK).